Reading from the N-terminus, the 218-residue chain is THAP domain-containing protein 3 (218 aa).

The segment at 1-82 (MPKSCAARQC…LKHNAVPTVF (82 aa)) adopts a THAP-type zinc-finger fold. 2 disordered regions span residues 97–120 (GGDS…PEGP) and 133–154 (ATEA…PGQP). Phosphoserine is present on S100. The short motif at 156 to 159 (DHSY) is the HCFC1-binding motif (HBM) element.

Component of a THAP1/THAP3-HCFC1-OGT complex that contains at least, either THAP1 or THAP3, HCFC1 and OGT. Interacts directly with OGT and HCFC1 (via its HBM). As to expression, highest levels in heart, liver and kidney. Lower levels in brain and lung.

Its function is as follows. Component of a THAP1/THAP3-HCFC1-OGT complex that is required for the regulation of the transcriptional activity of RRM1. The protein is THAP domain-containing protein 3 (Thap3) of Mus musculus (Mouse).